Here is a 336-residue protein sequence, read N- to C-terminus: Protein-arginine kinase (336 aa).

The Phosphagen kinase C-terminal domain maps to 22-245 (IVMSSRIRLA…QQIINEEMQI (224 aa)). Residues 25–29 (SSRIR), histidine 83, arginine 116, 167–171 (RASVM), and 198–203 (RGIYGE) contribute to the ATP site.

Belongs to the ATP:guanido phosphotransferase family.

It catalyses the reaction L-arginyl-[protein] + ATP = N(omega)-phospho-L-arginyl-[protein] + ADP + H(+). Its function is as follows. Catalyzes the specific phosphorylation of arginine residues in proteins. This Staphylococcus saprophyticus subsp. saprophyticus (strain ATCC 15305 / DSM 20229 / NCIMB 8711 / NCTC 7292 / S-41) protein is Protein-arginine kinase.